Reading from the N-terminus, the 100-residue chain is Small ribosomal subunit protein uS14c (100 aa).

The segment at 1–22 is disordered; the sequence is MARKGLIQRENKRQKLEQKYHS. A compositionally biased stretch (basic and acidic residues) spans 7–20; sequence IQRENKRQKLEQKY.

The protein belongs to the universal ribosomal protein uS14 family. In terms of assembly, part of the 30S ribosomal subunit.

The protein localises to the plastid. Its subcellular location is the chloroplast. Functionally, binds 16S rRNA, required for the assembly of 30S particles. This is Small ribosomal subunit protein uS14c from Daucus carota (Wild carrot).